The following is a 431-amino-acid chain: Glucose-6-phosphate isomerase (431 aa).

The active-site Proton donor is the Glu-284. Residues His-305 and Lys-420 contribute to the active site.

This sequence belongs to the GPI family.

The protein resides in the cytoplasm. It carries out the reaction alpha-D-glucose 6-phosphate = beta-D-fructose 6-phosphate. It functions in the pathway carbohydrate biosynthesis; gluconeogenesis. Its pathway is carbohydrate degradation; glycolysis; D-glyceraldehyde 3-phosphate and glycerone phosphate from D-glucose: step 2/4. Its function is as follows. Catalyzes the reversible isomerization of glucose-6-phosphate to fructose-6-phosphate. This chain is Glucose-6-phosphate isomerase, found in Mycoplasma genitalium (strain ATCC 33530 / DSM 19775 / NCTC 10195 / G37) (Mycoplasmoides genitalium).